A 744-amino-acid polypeptide reads, in one-letter code: Polyadenylate-binding protein, cytoplasmic and nuclear (744 aa).

A compositionally biased stretch (polar residues) spans 1–11 (MSEVANSTSPV). Residues 1–42 (MSEVANSTSPVQDGADANGAQINTNVPAASGDAPTPTTAAQQ) are disordered. Positions 33–42 (APTPTTAAQQ) are enriched in low complexity. RRM domains are found at residues 48-126 (ASLY…WSQR), 136-213 (GNVF…HHIP), 229-306 (TNIY…RAQK), and 332-462 (VNLY…LAQR). Disordered stretches follow at residues 368 to 411 (EEKK…AGDK), 527 to 550 (GRGA…NAQQ), 607 to 651 (IAGG…PGVD), and 723 to 744 (VKNK…EEKA). The segment covering 376–397 (KEVKEEKKEDEKKEDEEAKEGS) has biased composition (basic and acidic residues). 3 stretches are compositionally biased toward gly residues: residues 527–545 (GRGA…GRGG), 609–632 (GGPG…GGRG), and 640–649 (PQGGRPGGPG). Positions 647 to 724 (GPGVDMSVLS…AMSVYDEYVK (78 aa)) constitute a PABC domain.

This sequence belongs to the polyadenylate-binding protein type-1 family.

Its subcellular location is the cytoplasm. The protein localises to the nucleus. Its function is as follows. Binds the poly(A) tail of mRNA. Appears to be an important mediator of the multiple roles of the poly(A) tail in mRNA biogenesis, stability and translation. In the nucleus, involved in both mRNA cleavage and polyadenylation. Is also required for efficient mRNA export to the cytoplasm. Acts in concert with a poly(A)-specific nuclease (PAN) to affect poly(A) tail shortening, which may occur concomitantly with either nucleocytoplasmic mRNA transport or translational initiation. In the cytoplasm, stimulates translation initiation and regulates mRNA decay through translation termination-coupled poly(A) shortening, probably mediated by PAN. This chain is Polyadenylate-binding protein, cytoplasmic and nuclear (PAB1), found in Phaeosphaeria nodorum (strain SN15 / ATCC MYA-4574 / FGSC 10173) (Glume blotch fungus).